Consider the following 317-residue polypeptide: Glutathione synthetase (317 aa).

Positions 125–311 (EKMFATLFPQ…IGGKLMDAID (187 aa)) constitute an ATP-grasp domain. Position 152–208 (152–208 (TAKHADVILKPLDGMGGTSIFRHRAGDPNLSVILETLTALGTQQIMAQAYLPAIKDG)) interacts with ATP. Positions 282 and 284 each coordinate Mg(2+).

Belongs to the prokaryotic GSH synthase family. Mg(2+) serves as cofactor. Mn(2+) is required as a cofactor.

It carries out the reaction gamma-L-glutamyl-L-cysteine + glycine + ATP = glutathione + ADP + phosphate + H(+). It functions in the pathway sulfur metabolism; glutathione biosynthesis; glutathione from L-cysteine and L-glutamate: step 2/2. This Pseudomonas putida (strain ATCC 47054 / DSM 6125 / CFBP 8728 / NCIMB 11950 / KT2440) protein is Glutathione synthetase.